Consider the following 258-residue polypeptide: Acetylglutamate kinase (258 aa).

Substrate-binding positions include 44–45 (GG), Arg66, and Asn158. Residues 181–186 (DVSGIL) and 209–211 (IIT) each bind ATP.

The protein belongs to the acetylglutamate kinase family. ArgB subfamily. Homodimer.

The protein resides in the cytoplasm. It catalyses the reaction N-acetyl-L-glutamate + ATP = N-acetyl-L-glutamyl 5-phosphate + ADP. Its pathway is amino-acid biosynthesis; L-arginine biosynthesis; N(2)-acetyl-L-ornithine from L-glutamate: step 2/4. Its function is as follows. Catalyzes the ATP-dependent phosphorylation of N-acetyl-L-glutamate. This is Acetylglutamate kinase from Salmonella paratyphi A (strain ATCC 9150 / SARB42).